The following is a 225-amino-acid chain: Ribose-5-phosphate isomerase A (225 aa).

Residues 33–36 (TGST), 86–89 (DGAD), and 99–102 (KGGG) each bind substrate. The Proton acceptor role is filled by E108. K126 lines the substrate pocket.

Belongs to the ribose 5-phosphate isomerase family. As to quaternary structure, homodimer.

The enzyme catalyses aldehydo-D-ribose 5-phosphate = D-ribulose 5-phosphate. Its pathway is carbohydrate degradation; pentose phosphate pathway; D-ribose 5-phosphate from D-ribulose 5-phosphate (non-oxidative stage): step 1/1. Functionally, catalyzes the reversible conversion of ribose-5-phosphate to ribulose 5-phosphate. The polypeptide is Ribose-5-phosphate isomerase A (Bordetella petrii (strain ATCC BAA-461 / DSM 12804 / CCUG 43448)).